The following is a 905-amino-acid chain: Alanine--tRNA ligase (905 aa).

The Zn(2+) site is built by H569, H573, C693, and H697.

Belongs to the class-II aminoacyl-tRNA synthetase family. It depends on Zn(2+) as a cofactor.

The protein resides in the cytoplasm. The enzyme catalyses tRNA(Ala) + L-alanine + ATP = L-alanyl-tRNA(Ala) + AMP + diphosphate. Catalyzes the attachment of alanine to tRNA(Ala) in a two-step reaction: alanine is first activated by ATP to form Ala-AMP and then transferred to the acceptor end of tRNA(Ala). Also edits incorrectly charged Ser-tRNA(Ala) and Gly-tRNA(Ala) via its editing domain. In Roseiflexus castenholzii (strain DSM 13941 / HLO8), this protein is Alanine--tRNA ligase.